We begin with the raw amino-acid sequence, 67 residues long: Large ribosomal subunit protein bL28 (67 aa).

Belongs to the bacterial ribosomal protein bL28 family.

The polypeptide is Large ribosomal subunit protein bL28 (Nitratiruptor sp. (strain SB155-2)).